The primary structure comprises 326 residues: MAFTPFPPRQPTASARLPLTLMTLDDWALATITGADSEKYMQGQVTADVSQMTENQHLLAAHCDAKGKMWSNLRLFRDGDGFAWIERRSVREPQLTELKKYAVFSKVTIAPDDERVLLGVAGFQARAALANLFSELPSKEKQVVKEGATTLLWFEHPAERFLIVTDEATANMLTDKLRGEAELNNSQQWLALNIEAGFPVIDAANSGQFIPQATNLQALGGISFKKGCYTGQEMVARAKFRGANKRALWLLAGSASRLPEAGEDLELKMGENWRRTGTVLAAVKLEDGQVVVQVVMNNDMEPDSIFRVRDDANTLHIEPLPYSLEE.

The folate site is built by Trp-27 and Trp-189.

It belongs to the tRNA-modifying YgfZ family.

Its subcellular location is the cytoplasm. Its function is as follows. Folate-binding protein involved in regulating the level of ATP-DnaA and in the modification of some tRNAs. It is probably a key factor in regulatory networks that act via tRNA modification, such as initiation of chromosomal replication. This is tRNA-modifying protein YgfZ from Escherichia coli (strain SE11).